Consider the following 274-residue polypeptide: 2,3,4,5-tetrahydropyridine-2,6-dicarboxylate N-succinyltransferase (274 aa).

Substrate contacts are provided by arginine 104 and aspartate 141.

Belongs to the transferase hexapeptide repeat family. In terms of assembly, homotrimer.

The protein resides in the cytoplasm. It catalyses the reaction (S)-2,3,4,5-tetrahydrodipicolinate + succinyl-CoA + H2O = (S)-2-succinylamino-6-oxoheptanedioate + CoA. It functions in the pathway amino-acid biosynthesis; L-lysine biosynthesis via DAP pathway; LL-2,6-diaminopimelate from (S)-tetrahydrodipicolinate (succinylase route): step 1/3. The polypeptide is 2,3,4,5-tetrahydropyridine-2,6-dicarboxylate N-succinyltransferase (Escherichia coli O127:H6 (strain E2348/69 / EPEC)).